A 261-amino-acid polypeptide reads, in one-letter code: Cytochrome c oxidase subunit 3 (261 aa).

The Mitochondrial matrix portion of the chain corresponds to 1 to 15 (MTHQTHAYHMVNPSP). The helical transmembrane segment at 16–34 (WPLTGALSALLMTFGLIMW) threads the bilayer. At 35-40 (FHFNST) the chain is on the mitochondrial intermembrane side. Residues 41–66 (ALLMLGLTTNMLTMYQWWRDIIREST) form a helical membrane-spanning segment. The Mitochondrial matrix segment spans residues 67 to 72 (FQGHHT). A helical membrane pass occupies residues 73 to 105 (PVVQKGLRYGMILFIISEVLFFTGFFWAFYHSS). Residues 106-128 (LAPTPELGGCWPPTGIHPLNPLE) lie on the Mitochondrial intermembrane side of the membrane. The helical transmembrane segment at 129–152 (VPLLNTSVLLASGVSITWAHHSLM) threads the bilayer. The Mitochondrial matrix segment spans residues 153-155 (EGH). The helical transmembrane segment at 156–183 (RNHMLQALFITIALGVYFTLLQASEYYE) threads the bilayer. Residues 184–190 (APFTISD) are Mitochondrial intermembrane-facing. The helical transmembrane segment at 191–223 (GVYGSTFFVATGFHGLHVIIGSTFLIVCFFRQL) threads the bilayer. Residues 224 to 232 (KFHFTSSHH) are Mitochondrial matrix-facing. A helical membrane pass occupies residues 233 to 256 (FGFEAAAWYWHFVDVVWLFLYVSI). The Mitochondrial intermembrane portion of the chain corresponds to 257 to 261 (YWWGS).

The protein belongs to the cytochrome c oxidase subunit 3 family. Component of the cytochrome c oxidase (complex IV, CIV), a multisubunit enzyme composed of 14 subunits. The complex is composed of a catalytic core of 3 subunits MT-CO1, MT-CO2 and MT-CO3, encoded in the mitochondrial DNA, and 11 supernumerary subunits COX4I, COX5A, COX5B, COX6A, COX6B, COX6C, COX7A, COX7B, COX7C, COX8 and NDUFA4, which are encoded in the nuclear genome. The complex exists as a monomer or a dimer and forms supercomplexes (SCs) in the inner mitochondrial membrane with NADH-ubiquinone oxidoreductase (complex I, CI) and ubiquinol-cytochrome c oxidoreductase (cytochrome b-c1 complex, complex III, CIII), resulting in different assemblies (supercomplex SCI(1)III(2)IV(1) and megacomplex MCI(2)III(2)IV(2)).

The protein resides in the mitochondrion inner membrane. It carries out the reaction 4 Fe(II)-[cytochrome c] + O2 + 8 H(+)(in) = 4 Fe(III)-[cytochrome c] + 2 H2O + 4 H(+)(out). Component of the cytochrome c oxidase, the last enzyme in the mitochondrial electron transport chain which drives oxidative phosphorylation. The respiratory chain contains 3 multisubunit complexes succinate dehydrogenase (complex II, CII), ubiquinol-cytochrome c oxidoreductase (cytochrome b-c1 complex, complex III, CIII) and cytochrome c oxidase (complex IV, CIV), that cooperate to transfer electrons derived from NADH and succinate to molecular oxygen, creating an electrochemical gradient over the inner membrane that drives transmembrane transport and the ATP synthase. Cytochrome c oxidase is the component of the respiratory chain that catalyzes the reduction of oxygen to water. Electrons originating from reduced cytochrome c in the intermembrane space (IMS) are transferred via the dinuclear copper A center (CU(A)) of subunit 2 and heme A of subunit 1 to the active site in subunit 1, a binuclear center (BNC) formed by heme A3 and copper B (CU(B)). The BNC reduces molecular oxygen to 2 water molecules using 4 electrons from cytochrome c in the IMS and 4 protons from the mitochondrial matrix. This is Cytochrome c oxidase subunit 3 (MT-CO3) from Tragelaphus oryx (Eland).